A 453-amino-acid polypeptide reads, in one-letter code: 4,4'-diapolycopene-4,4'-dial dehydrogenase (453 aa).

Residues 1–20 are compositionally biased toward basic and acidic residues; that stretch reads MPDNDSHSLKSLPERQREDL. The tract at residues 1-23 is disordered; it reads MPDNDSHSLKSLPERQREDLFSA. Active-site residues include Glu215 and Cys249.

Belongs to the aldehyde dehydrogenase family.

The enzyme catalyses all-trans-4,4'-diapolycopene-4,4'-dial + 2 A + 2 H2O = all-trans-4,4'-diapolycopene-4,4'-dioate + 2 AH2 + 2 H(+). Its pathway is carotenoid biosynthesis. In terms of biological role, involved in the biosynthesis of the major C30 carotenoid 4,4'-diapolycopene-4,4'-dioic acid, which protects B.firmus from peroxidative reactions. Catalyzes the oxidation of 4,4'-diapolycopene-4,4'-dial to yield 4,4'-diapolycopene-4,4'-dioic aci. The protein is 4,4'-diapolycopene-4,4'-dial dehydrogenase of Cytobacillus firmus (Bacillus firmus).